The sequence spans 294 residues: N-acetylmuramic acid 6-phosphate etherase (294 aa).

The SIS domain occupies 54–217; that stretch reads VTKSFEEEGR…STASMIGVGK (164 aa). The Proton donor role is filled by glutamate 82. Residue glutamate 113 is part of the active site.

The protein belongs to the GCKR-like family. MurNAc-6-P etherase subfamily. Homodimer.

It carries out the reaction N-acetyl-D-muramate 6-phosphate + H2O = N-acetyl-D-glucosamine 6-phosphate + (R)-lactate. Its pathway is amino-sugar metabolism; N-acetylmuramate degradation. Specifically catalyzes the cleavage of the D-lactyl ether substituent of MurNAc 6-phosphate, producing GlcNAc 6-phosphate and D-lactate. This chain is N-acetylmuramic acid 6-phosphate etherase, found in Bacillus mycoides (strain KBAB4) (Bacillus weihenstephanensis).